The sequence spans 89 residues: Small ribosomal subunit protein uS15 (89 aa).

Belongs to the universal ribosomal protein uS15 family. In terms of assembly, part of the 30S ribosomal subunit. Forms a bridge to the 50S subunit in the 70S ribosome, contacting the 23S rRNA.

One of the primary rRNA binding proteins, it binds directly to 16S rRNA where it helps nucleate assembly of the platform of the 30S subunit by binding and bridging several RNA helices of the 16S rRNA. Functionally, forms an intersubunit bridge (bridge B4) with the 23S rRNA of the 50S subunit in the ribosome. The polypeptide is Small ribosomal subunit protein uS15 (Vibrio cholerae serotype O1 (strain ATCC 39541 / Classical Ogawa 395 / O395)).